The primary structure comprises 105 residues: Small ribosomal subunit protein uS10c (105 aa).

The protein belongs to the universal ribosomal protein uS10 family. As to quaternary structure, part of the 30S ribosomal subunit.

Its subcellular location is the plastid. The protein localises to the chloroplast. Involved in the binding of tRNA to the ribosomes. The polypeptide is Small ribosomal subunit protein uS10c (Porphyra purpurea (Red seaweed)).